Here is a 192-residue protein sequence, read N- to C-terminus: NF-kappa-B inhibitor-interacting Ras-like protein 1 (192 aa).

A GTP-binding site is contributed by 11–18; sequence GLLSVGKT. The Effector region signature appears at 35-43; that stretch reads DCETMEDVY. Residues 58–93 form an interactions with NFKBIA and NFKBIB region; that stretch reads HLYDTRGLQEGVELPKHYFSFADGFVLVYSVNNLES. GTP-binding positions include 61 to 65 and 120 to 123; these read DTRGL and NKID. Residues 168–192 are disordered; sequence LSQPQSKSSFPLPGRKNKGNSNSEN.

It belongs to the small GTPase superfamily. Ras family. KappaB-Ras subfamily. As to quaternary structure, interacts with both NF-kappa-B inhibitor alpha (NFKBIA) and beta (NFKBIB) in vitro. However, it probably only interacts with NFKBIB in vivo. Forms a complex with NFKBIB and NF-kappa-B heterodimer (p50/NFKB1 and p65/RELA). Also interacts with c-Rel (REL). Widely expressed.

The protein resides in the cytoplasm. Functionally, atypical Ras-like protein that acts as a potent regulator of NF-kappa-B activity by preventing the degradation of NF-kappa-B inhibitor beta (NFKBIB) by most signals, explaining why NFKBIB is more resistant to degradation. May act by blocking phosphorylation of NFKBIB and mediating cytoplasmic retention of p65/RELA NF-kappa-B subunit. It is unclear whether it acts as a GTPase. Both GTP- and GDP-bound forms block phosphorylation of NFKBIB. The protein is NF-kappa-B inhibitor-interacting Ras-like protein 1 (NKIRAS1) of Homo sapiens (Human).